The sequence spans 291 residues: Meteorin (291 aa).

Residues Met1–Ala21 form the signal peptide. Disulfide bonds link Cys28/Cys49, Cys80/Cys116, Cys169/Cys240, Cys172/Cys264, and Cys182/Cys286.

The protein belongs to the meteorin family. As to quaternary structure, monomer. As to expression, highly expressed in brain. Expressed in undifferentiated neural progenitors and in astrocyte lineage, particularly in Bergmann glia, a subtype of radial glia, and a few discrete neuronal populations residing in the superior colliculus, the ocular motor nucleus, the raphe and pontine nuclei, and in various thalamic nuclei. Weakly expressed in heart, kidney, skeletal muscle, spleen, testis, gut and lung.

The protein resides in the secreted. Its function is as follows. Involved in both glial cell differentiation and axonal network formation during neurogenesis. Promotes astrocyte differentiation and transforms cerebellar astrocytes into radial glia. Also induces axonal extension in small and intermediate neurons of sensory ganglia by activating nearby satellite glia. The sequence is that of Meteorin (Metrn) from Mus musculus (Mouse).